The primary structure comprises 585 residues: Arginine--tRNA ligase (585 aa).

The 'HIGH' region motif lies at 131 to 141; sequence ANPTGPMHVGH.

It belongs to the class-I aminoacyl-tRNA synthetase family. In terms of assembly, monomer.

The protein localises to the cytoplasm. The catalysed reaction is tRNA(Arg) + L-arginine + ATP = L-arginyl-tRNA(Arg) + AMP + diphosphate. The sequence is that of Arginine--tRNA ligase from Bartonella henselae (strain ATCC 49882 / DSM 28221 / CCUG 30454 / Houston 1) (Rochalimaea henselae).